Reading from the N-terminus, the 130-residue chain is U-scoloptoxin(17)-Er1a (130 aa).

The first 18 residues, 1–18 (MKLLVFALFLQVVQLSLA), serve as a signal peptide directing secretion.

This sequence belongs to the scoloptoxin-17 family. Contains 4 disulfide bonds. In terms of tissue distribution, expressed by the venom gland.

It is found in the secreted. This is U-scoloptoxin(17)-Er1a from Ethmostigmus rubripes (Giant centipede).